We begin with the raw amino-acid sequence, 915 residues long: Translation initiation factor IF-2 (915 aa).

2 disordered regions span residues 1-105 (MSEG…RALT) and 121-295 (VEAA…RAAI). Residues 57–81 (PGTPSAPEGGSSSAPAPQSGNAPQG) show a composition bias toward low complexity. A compositionally biased stretch (gly residues) spans 84 to 101 (RSGGGNRGSGRGGAGGAG). Composition is skewed to basic and acidic residues over residues 121–135 (VEAA…EQEK) and 143–180 (EEAR…RKAA). Pro residues predominate over residues 186 to 195 (AEAPPVPPPA). 2 stretches are compositionally biased toward low complexity: residues 201–213 (AAPS…SRTA) and 230–239 (KVPVAAPSAP). Positions 243–256 (RLRERGDEGEEERK) are enriched in basic and acidic residues. A compositionally biased stretch (low complexity) spans 266–278 (PAPRKAAAPVAKK). Over residues 279-295 (AVAEPRRGGRIDVRAAI) the composition is skewed to basic and acidic residues. The region spanning 414 to 584 (PRPPVVTVMG…LLQAEVLDLK (171 aa)) is the tr-type G domain. The tract at residues 423–430 (GHVDHGKT) is G1. A GTP-binding site is contributed by 423 to 430 (GHVDHGKT). The interval 448-452 (GITQH) is G2. The tract at residues 470–473 (DTPG) is G3. GTP contacts are provided by residues 470–474 (DTPGH) and 524–527 (NKCD). A G4 region spans residues 524-527 (NKCD). Residues 560 to 562 (SAL) are G5.

The protein belongs to the TRAFAC class translation factor GTPase superfamily. Classic translation factor GTPase family. IF-2 subfamily.

The protein resides in the cytoplasm. Functionally, one of the essential components for the initiation of protein synthesis. Protects formylmethionyl-tRNA from spontaneous hydrolysis and promotes its binding to the 30S ribosomal subunits. Also involved in the hydrolysis of GTP during the formation of the 70S ribosomal complex. The protein is Translation initiation factor IF-2 of Granulibacter bethesdensis (strain ATCC BAA-1260 / CGDNIH1).